The following is a 100-amino-acid chain: Aspartyl/glutamyl-tRNA(Asn/Gln) amidotransferase subunit C (100 aa).

Belongs to the GatC family. In terms of assembly, heterotrimer of A, B and C subunits.

It catalyses the reaction L-glutamyl-tRNA(Gln) + L-glutamine + ATP + H2O = L-glutaminyl-tRNA(Gln) + L-glutamate + ADP + phosphate + H(+). The enzyme catalyses L-aspartyl-tRNA(Asn) + L-glutamine + ATP + H2O = L-asparaginyl-tRNA(Asn) + L-glutamate + ADP + phosphate + 2 H(+). Allows the formation of correctly charged Asn-tRNA(Asn) or Gln-tRNA(Gln) through the transamidation of misacylated Asp-tRNA(Asn) or Glu-tRNA(Gln) in organisms which lack either or both of asparaginyl-tRNA or glutaminyl-tRNA synthetases. The reaction takes place in the presence of glutamine and ATP through an activated phospho-Asp-tRNA(Asn) or phospho-Glu-tRNA(Gln). This chain is Aspartyl/glutamyl-tRNA(Asn/Gln) amidotransferase subunit C, found in Rickettsia canadensis (strain McKiel).